A 583-amino-acid chain; its full sequence is Nuclear distribution protein nudE homolog 1 (583 aa).

The stretch at 14-195 (ATLEDTLGWY…QDKFKKQESR (182 aa)) forms a coiled coil. Disordered regions lie at residues 34 to 68 (LAEF…KAET), 211 to 339 (TFDG…TSNS), and 358 to 583 (HSVR…GETY). Basic and acidic residues predominate over residues 35-67 (AEFRDSSRELEQELEKDIERAEKQERHHQEKAE). Polar residues-rich tracts occupy residues 219 to 235 (PGST…TDSK), 279 to 319 (RSRL…TMRT), 329 to 339 (SASNKLPTSNS), 379 to 392 (NVYS…SITI), and 399 to 422 (SGSA…STPK). A compositionally biased stretch (low complexity) spans 453–469 (RPSSRASTSYATSYARP). Polar residues predominate over residues 529 to 538 (RRGTYSSQGG).

Belongs to the nudE family. As to quaternary structure, self-associates. Interacts with PAC1.

Its subcellular location is the cytoplasm. It is found in the cytoskeleton. Required for nuclear migration. This is Nuclear distribution protein nudE homolog 1 (NDE1) from Gibberella zeae (strain ATCC MYA-4620 / CBS 123657 / FGSC 9075 / NRRL 31084 / PH-1) (Wheat head blight fungus).